The sequence spans 297 residues: UBX domain-containing protein 1 (297 aa).

Ala2 is subject to N-acetylalanine. Residues 2–42 (AELTALESLIEMGFPRGRAEKALALTGNQGIEAAMDWLMEH) form the UBA domain. Residues 38-214 (WLMEHEDDPD…PPTKREYDQC (177 aa)) form a disordered region. Residues 42 to 52 (HEDDPDVDEPL) show a composition bias toward acidic residues. The segment at 43-297 (EDDPDVDEPL…VLIVAKKCPS (255 aa)) is interaction with BRCA1. Basic and acidic residues-rich tracts occupy residues 86-122 (LTEE…EREK) and 137-177 (KLQE…ERAK). Ser199 is subject to Phosphoserine. Ser200 bears the Phosphoserine; by MAPK12 mark. Thr207 and Thr229 each carry phosphothreonine. The 83-residue stretch at 209-291 (REYDQCRIQV…GLVPSAVLIV (83 aa)) folds into the UBX domain. Position 270 is a phosphoserine (Ser270).

Interacts with MAVS; this interaction prevents MAVS oligomerization and thus disrupts the RLR signaling pathway. Interacts with CUL1; this interaction inhibits CUL1-mediated degradation of NF-kappa-B inhibitors. Interacts with BIRC2/c-IAP1; this interaction prevents TNFalpha-stimulated RIP1 ubiquitination and subsequent NF-kappa-B activation. Component of a complex required to couple retrotranslocation, ubiquitination and deglycosylation composed of NGLY1, SAKS1, AMFR, VCP and RAD23B. Interacts with HOMER2. Interacts directly with VCP. Interacts with BRCA1 and BARD1; interaction takes place when BRCA1 is not autoubiquitinated but is strongly enhanced in the presence of autoubiquitinated BRCA1.

Its subcellular location is the cytoplasm. Functionally, ubiquitin-binding protein that plays a role in the modulation of innate immune response. Blocks both the RIG-I-like receptors (RLR) and NF-kappa-B pathways. Following viral infection, UBXN1 is induced and recruited to the RLR component MAVS. In turn, interferes with MAVS oligomerization, and disrupts the MAVS/TRAF3/TRAF6 signalosome. This function probably serves as a brake to prevent excessive RLR signaling. Interferes with the TNFalpha-triggered NF-kappa-B pathway by interacting with cellular inhibitors of apoptosis proteins (cIAPs) and thereby inhibiting their recruitment to TNFR1. Also prevents the activation of NF-kappa-B by associating with CUL1 and thus inhibiting NF-kappa-B inhibitor alpha/NFKBIA degradation that remains bound to NF-kappa-B. Interacts with the BRCA1-BARD1 heterodimer and regulates its activity. Specifically binds 'Lys-6'-linked polyubiquitin chains. Interaction with autoubiquitinated BRCA1 leads to the inhibition of the E3 ubiquitin-protein ligase activity of the BRCA1-BARD1 heterodimer. Component of a complex required to couple deglycosylation and proteasome-mediated degradation of misfolded proteins in the endoplasmic reticulum that are retrotranslocated in the cytosol. The protein is UBX domain-containing protein 1 (Ubxn1) of Mus musculus (Mouse).